The primary structure comprises 503 residues: MTSTEGTGGGDGKGISGFSDIERRSILDPHLSVLELLRRPSDTRPHEALKGEVSDIVGNCAGTTGTGNGSISQSWQTIHRNDSCLSVVPERCPSQATAAGILSSSDTSEDEPDAVNSPSAVHQQLHATPPQKHTKSLEDYRSLNVGIPLVLPEDSNNINNNNKNGSTTGSNGEEDDNDTITKSLNSSSNSFIMPKLSLSQKTQKFRILVLGRPGLKFYHSIPKKYQHMFELPRSHDPAEFKQYTGILVVFQELKEMVSLLNRVCQCNPNRPVIPVCQSGQRQQVRNLLESLLKNRLVSLLYPPVVVNNQPDLLGMFRFLQELSKTVSDNSDMDAEEPNNGSKRLKRSLQRKKKKFIETSAERNGRPHKKRHNNEKVNRWVLWGVSLTLGVGVGYCISHLVSSTWISLTTNPLGPVDPESVSKDLFVFDRQELKLGEMDMDSDHPFGHALFLFKQALKQWNLAVKQFLGRHLSCMERIGPANCLEWPTSDEHTNRVLALGYVML.

3 disordered regions span residues 98-138, 151-186, and 328-370; these read AAGI…KSLE, LPEDSNNINNNNKNGSTTGSNGEEDDNDTITKSLNS, and DNSD…HKKR. The span at 116–126 shows a compositional bias: polar residues; that stretch reads NSPSAVHQQLH. Residues 155-171 show a composition bias toward low complexity; it reads SNNINNNNKNGSTTGSN. Over residues 342-354 the composition is skewed to basic residues; sequence KRLKRSLQRKKKK. Positions 355–364 are enriched in basic and acidic residues; it reads FIETSAERNG. Residues 380–396 traverse the membrane as a helical segment; that stretch reads VLWGVSLTLGVGVGYCI.

This sequence belongs to the ATG32 family.

It localises to the mitochondrion outer membrane. It is found in the vacuole membrane. The protein localises to the preautophagosomal structure membrane. Functionally, mitophagy-specific receptor that recruits the autophagic machinery to mitochondria and regulates selective degradation of mitochondria. Mitophagy contributes to regulate mitochondrial quantity and quality by eliminating the mitochondria to a basal level to fulfill cellular energy requirements and preventing excess ROS production. Recruits ATG11 to the surface of mitochondria. Also promotes autophagy-dependent peroxisome degradation. The polypeptide is Autophagy-related protein 32 (ATG32) (Zygosaccharomyces rouxii (strain ATCC 2623 / CBS 732 / NBRC 1130 / NCYC 568 / NRRL Y-229)).